The chain runs to 248 residues: Triosephosphate isomerase (248 aa).

9–11 lines the substrate pocket; the sequence is NWK. Catalysis depends on His94, which acts as the Electrophile. The Proton acceptor role is filled by Glu166. Substrate contacts are provided by residues Gly172, Ser212, and 233–234; that span reads GG.

The protein belongs to the triosephosphate isomerase family. In terms of assembly, homodimer.

The protein resides in the cytoplasm. The catalysed reaction is D-glyceraldehyde 3-phosphate = dihydroxyacetone phosphate. It participates in carbohydrate biosynthesis; gluconeogenesis. The protein operates within carbohydrate degradation; glycolysis; D-glyceraldehyde 3-phosphate from glycerone phosphate: step 1/1. Involved in the gluconeogenesis. Catalyzes stereospecifically the conversion of dihydroxyacetone phosphate (DHAP) to D-glyceraldehyde-3-phosphate (G3P). In Clostridium beijerinckii (strain ATCC 51743 / NCIMB 8052) (Clostridium acetobutylicum), this protein is Triosephosphate isomerase.